The chain runs to 255 residues: Geranylgeranylglyceryl phosphate synthase (255 aa).

2 residues coordinate Mg(2+): aspartate 25 and serine 54. Residues tyrosine 173–glycine 179, glycine 203–glycine 204, and glycine 225–threonine 226 each bind sn-glycerol 1-phosphate.

It belongs to the GGGP/HepGP synthase family. Group II subfamily. It depends on Mg(2+) as a cofactor.

The protein localises to the cytoplasm. It catalyses the reaction sn-glycerol 1-phosphate + (2E,6E,10E)-geranylgeranyl diphosphate = sn-3-O-(geranylgeranyl)glycerol 1-phosphate + diphosphate. It functions in the pathway membrane lipid metabolism; glycerophospholipid metabolism. Prenyltransferase that catalyzes the transfer of the geranylgeranyl moiety of geranylgeranyl diphosphate (GGPP) to the C3 hydroxyl of sn-glycerol-1-phosphate (G1P). This reaction is the first ether-bond-formation step in the biosynthesis of archaeal membrane lipids. The polypeptide is Geranylgeranylglyceryl phosphate synthase (Thermofilum pendens (strain DSM 2475 / Hrk 5)).